Consider the following 1841-residue polypeptide: Cell division control protein 12 (1841 aa).

Composition is skewed to polar residues over residues 1–25 and 46–63; these read MRNS…TPSA and SIES…QSVT. Disordered regions lie at residues 1–63, 78–134, and 152–181; these read MRNS…QSVT, NSHN…GPRL, and PPVH…RTKH. A GBD/FH3 domain is found at 232 to 620; it reads TRPPSLDQLI…RILLNSKVSN (389 aa). Residues 674–715 are a coiled coil; it reads LGAEDLIAKLNKEVEDQKDVILSQKRTNETLKTEIDALQKSH. An FH1 domain is found at 740–972; it reads GSTNSKERII…VSPAVSNNIS (233 aa). An FH2 domain is found at 980–1391; it reads TGLTRRPTRR…QHRRLNLVNN (412 aa). Residues 1260-1290 adopt a coiled-coil conformation; sequence TEAAKLNIEAIEQECSELIRGCQNLQIDCDS. Disordered stretches follow at residues 1445 to 1661, 1696 to 1715, and 1735 to 1758; these read EAPN…ENNL, TTTT…INTI, and KSNK…GSNK. 2 stretches are compositionally biased toward polar residues: residues 1447 to 1456 and 1483 to 1497; these read PNTSTKSSPA and SEST…NITP. The segment covering 1499-1516 has biased composition (basic and acidic residues); that stretch reads KKGEVSSKAKKGYNYEKR. Residues 1539–1553 show a composition bias toward polar residues; that stretch reads GRSASYTFSDPSSLE. Ser-1541 is subject to Phosphoserine. Tyr-1544 is modified (phosphotyrosine). Over residues 1554–1567 the composition is skewed to basic and acidic residues; that stretch reads DSNRQKPFNGEKFR. The segment covering 1568 to 1577 has biased composition (basic residues); it reads RFSSKSRRGS. Polar residues predominate over residues 1594–1604; the sequence is INNNQTSPQNK. Positions 1605 to 1621 are enriched in basic and acidic residues; sequence PSKESLKSDTISNEKKV. The span at 1630-1641 shows a compositional bias: polar residues; it reads NLLTPTISNGTR.

It belongs to the formin homology family. BNI1 subfamily. As to quaternary structure, interacts with profilin and actin at the FH1 and FH2 domains respectively.

It is found in the nucleus. Functionally, plays a role in the cell cycle. Involved in cytokinesis. Component of the cell division ring. In the absence of profilin, caps the barbed end of actin filaments, thus preventing subunit addition and dissociation. In the presence of profilin, nucleates actin filaments that grow rapidly from their barbed ends. In Schizosaccharomyces pombe (strain 972 / ATCC 24843) (Fission yeast), this protein is Cell division control protein 12 (cdc12).